A 283-amino-acid chain; its full sequence is Orotidine 5'-phosphate decarboxylase (283 aa).

Residue Lys-97 is the Proton donor of the active site.

It belongs to the OMP decarboxylase family. Type 2 subfamily.

The catalysed reaction is orotidine 5'-phosphate + H(+) = UMP + CO2. Its pathway is pyrimidine metabolism; UMP biosynthesis via de novo pathway; UMP from orotate: step 2/2. The polypeptide is Orotidine 5'-phosphate decarboxylase (Clostridium botulinum (strain Okra / Type B1)).